A 362-amino-acid chain; its full sequence is 3-dehydroquinate synthase (362 aa).

NAD(+) is bound by residues Asp70 to Lys75, Gly104 to Asp108, Thr128 to Thr129, Lys141, and Lys150. 3 residues coordinate Zn(2+): Glu183, His246, and His263.

It belongs to the sugar phosphate cyclases superfamily. Dehydroquinate synthase family. Requires Co(2+) as cofactor. It depends on Zn(2+) as a cofactor. NAD(+) is required as a cofactor.

It is found in the cytoplasm. It carries out the reaction 7-phospho-2-dehydro-3-deoxy-D-arabino-heptonate = 3-dehydroquinate + phosphate. The protein operates within metabolic intermediate biosynthesis; chorismate biosynthesis; chorismate from D-erythrose 4-phosphate and phosphoenolpyruvate: step 2/7. Catalyzes the conversion of 3-deoxy-D-arabino-heptulosonate 7-phosphate (DAHP) to dehydroquinate (DHQ). In Acinetobacter baylyi (strain ATCC 33305 / BD413 / ADP1), this protein is 3-dehydroquinate synthase.